Consider the following 623-residue polypeptide: Membrane protein insertase YidC (623 aa).

5 helical membrane passes run 8–28 (LILA…LFPP), 379–399 (MGLA…PLAY), 449–469 (LPIL…FVTI), 507–527 (TTMA…SMWL), and 543–563 (IFAW…SGLV). Over residues 601–617 (KPAAQPAGKAANDGAAP) the composition is skewed to low complexity. The interval 601–623 (KPAAQPAGKAANDGAAPAKKRKP) is disordered.

Belongs to the OXA1/ALB3/YidC family. Type 1 subfamily. As to quaternary structure, interacts with the Sec translocase complex via SecD. Specifically interacts with transmembrane segments of nascent integral membrane proteins during membrane integration.

It is found in the cell inner membrane. In terms of biological role, required for the insertion and/or proper folding and/or complex formation of integral membrane proteins into the membrane. Involved in integration of membrane proteins that insert both dependently and independently of the Sec translocase complex, as well as at least some lipoproteins. Aids folding of multispanning membrane proteins. In Cereibacter sphaeroides (strain ATCC 17029 / ATH 2.4.9) (Rhodobacter sphaeroides), this protein is Membrane protein insertase YidC.